The chain runs to 565 residues: Sulfite reductase [NADPH] hemoprotein beta-component (565 aa).

Residues Cys429, Cys435, Cys474, and Cys478 each contribute to the [4Fe-4S] cluster site. A siroheme-binding site is contributed by Cys478.

It belongs to the nitrite and sulfite reductase 4Fe-4S domain family. In terms of assembly, alpha(8)-beta(8). The alpha component is a flavoprotein, the beta component is a hemoprotein. Siroheme serves as cofactor. Requires [4Fe-4S] cluster as cofactor.

The enzyme catalyses hydrogen sulfide + 3 NADP(+) + 3 H2O = sulfite + 3 NADPH + 4 H(+). It participates in sulfur metabolism; hydrogen sulfide biosynthesis; hydrogen sulfide from sulfite (NADPH route): step 1/1. In terms of biological role, component of the sulfite reductase complex that catalyzes the 6-electron reduction of sulfite to sulfide. This is one of several activities required for the biosynthesis of L-cysteine from sulfate. This chain is Sulfite reductase [NADPH] hemoprotein beta-component, found in Pseudoalteromonas translucida (strain TAC 125).